The chain runs to 2222 residues: DNA polymerase epsilon catalytic subunit A (2222 aa).

The tract at residues 90-110 (ETLSSGSNGGGNSNDGERVTT) is disordered. Residues cysteine 2108, cysteine 2111, cysteine 2130, and cysteine 2133 each contribute to the Zn(2+) site. The CysA-type zinc finger occupies 2108-2133 (CEYCFFISDIDFCKAAPESIFSCVRC). Residues cysteine 2164, cysteine 2167, cysteine 2179, and cysteine 2181 each contribute to the [4Fe-4S] cluster site. The CysB motif motif lies at 2164–2181 (CSRCHKVKRDYMSAHCPC).

The protein belongs to the DNA polymerase type-B family. As to quaternary structure, DNA polymerase epsilon is a heterotetramer consisting of POL2, DPB2, DPB3 and DPB4. The cofactor is [4Fe-4S] cluster.

The protein localises to the nucleus. The catalysed reaction is DNA(n) + a 2'-deoxyribonucleoside 5'-triphosphate = DNA(n+1) + diphosphate. Functionally, catalytic component of the DNA polymerase epsilon complex which participates in chromosomal DNA replication. Required during synthesis of the leading DNA strands at the replication fork, binds at/or near replication origins and moves along DNA with the replication fork. Has 3'-5' proofreading exonuclease activity that corrects errors arising during DNA replication. The sequence is that of DNA polymerase epsilon catalytic subunit A (POL2) from Saccharomyces cerevisiae (strain ATCC 204508 / S288c) (Baker's yeast).